Consider the following 59-residue polypeptide: Large ribosomal subunit protein bL32 (59 aa).

Positions 1–22 (MAVQQNKKSPSKRGMHRSHDFL) are disordered.

The protein belongs to the bacterial ribosomal protein bL32 family.

The chain is Large ribosomal subunit protein bL32 from Thiobacillus denitrificans (strain ATCC 25259 / T1).